The chain runs to 344 residues: GTPase Obg (344 aa).

One can recognise an Obg domain in the interval 1–159 (MKFLDQAKVY…RWIWLRLKLI (159 aa)). The OBG-type G domain occupies 160–327 (ADAGLVGLPN…ALRLLLSVVE (168 aa)). GTP contacts are provided by residues 166–173 (GLPNAGKS), 191–195 (FTTLH), 212–215 (DIPG), 279–282 (SKVD), and 308–310 (SAQ). The Mg(2+) site is built by S173 and T193.

This sequence belongs to the TRAFAC class OBG-HflX-like GTPase superfamily. OBG GTPase family. As to quaternary structure, monomer. Mg(2+) is required as a cofactor.

The protein resides in the cytoplasm. In terms of biological role, an essential GTPase which binds GTP, GDP and possibly (p)ppGpp with moderate affinity, with high nucleotide exchange rates and a fairly low GTP hydrolysis rate. Plays a role in control of the cell cycle, stress response, ribosome biogenesis and in those bacteria that undergo differentiation, in morphogenesis control. This chain is GTPase Obg, found in Xanthobacter autotrophicus (strain ATCC BAA-1158 / Py2).